Consider the following 94-residue polypeptide: MAPLKMLALVILLLGASLQHIHAARGTNVGRECCLKYFKGAIPLRKLKTWYQTSEDCSRDAIVFVTVQNKAICSDPNDKKVKKALKYLQSLERS.

An N-terminal signal peptide occupies residues 1–23 (MAPLKMLALVILLLGASLQHIHA). 2 disulfide bridges follow: Cys-33–Cys-57 and Cys-34–Cys-73.

The protein belongs to the intercrine beta (chemokine CC) family.

The protein localises to the secreted. Chemokine, which displays chemotactic activity for T lymphocytes, preferentially Th2 cells, but not monocytes or granulocytes. Therefore plays an important role in a wide range of inflammatory and immunological processes. Acts by binding to CCR4 at T-cell surface. Mediates GM-CSF/CSF2-driven pain and inflammation. In the brain, required to maintain the typical, highly branched morphology of hippocampal microglia under homeostatic conditions. May be important for the appropriate adaptation of microglial morphology and synaptic plasticity to acute lipopolysaccharide (LPS)-induced neuroinflammation. Plays a role in wound healing, mainly by inducing fibroblast migration into the wound. The sequence is that of C-C motif chemokine 17 (CCL17) from Macaca mulatta (Rhesus macaque).